The following is a 197-amino-acid chain: Xanthine phosphoribosyltransferase (197 aa).

Positions 20 and 27 each coordinate xanthine. A 5-phospho-alpha-D-ribose 1-diphosphate-binding site is contributed by 128-132 (ANGQA). K156 contributes to the xanthine binding site.

The protein belongs to the purine/pyrimidine phosphoribosyltransferase family. Xpt subfamily. Homodimer.

Its subcellular location is the cytoplasm. It carries out the reaction XMP + diphosphate = xanthine + 5-phospho-alpha-D-ribose 1-diphosphate. The protein operates within purine metabolism; XMP biosynthesis via salvage pathway; XMP from xanthine: step 1/1. Its function is as follows. Converts the preformed base xanthine, a product of nucleic acid breakdown, to xanthosine 5'-monophosphate (XMP), so it can be reused for RNA or DNA synthesis. This chain is Xanthine phosphoribosyltransferase, found in Bacillus cytotoxicus (strain DSM 22905 / CIP 110041 / 391-98 / NVH 391-98).